The primary structure comprises 329 residues: MSAAILLAPGDVIKRSSEELKQRQIQINLVDWMESEGGKEDKTEPKEESKAEGSKDGEGTQSESGQKEEGGKETKDADVDRRIHTAVGSGSGTKGSGERANENANRGDGKVGGGGGDADAGVGATGTNGGRWVVLTEEIARAIESKYGTKIDVYRDDVPAQIIEVERSLQKELGISREGVAEQTERLRDLRRKEKNGTHAKAVERGGRKQRKKAHGDAQREGVEEEKTSEEPARIGITIEGVMSQKKLLSMIGGVERKMAPIGARESAVMLVSNSIKDVVRATAYFTAPTGDPHWKEVAREASKKKNILAYTSTGGDVKTEFLHLIDHL.

Disordered regions lie at residues 27 to 130 (INLV…TNGG) and 189 to 232 (DLRR…SEEP). Composition is skewed to basic and acidic residues over residues 36-58 (EGGKEDKTEPKEESKAEGSKDGE), 65-83 (GQKEEGGKETKDADVDRRI), and 96-109 (SGERANENANRGDG). Position 110 (Lys110) interacts with ATP. Gly residues predominate over residues 110–129 (KVGGGGGDADAGVGATGTNG). Composition is skewed to basic and acidic residues over residues 189–207 (DLRRKEKNGTHAKAVERGG) and 215–232 (HGDAQREGVEEEKTSEEP).

Belongs to the reoviruses VP6 family. As to quaternary structure, homohexamer.

It is found in the virion. It carries out the reaction ATP + H2O = ADP + phosphate + H(+). In terms of biological role, ATP dependent RNA helicase essential for RNA packaging and viral transcription. Possesses ss- and dsRNA-binding capacity. The sequence is that of Helicase VP6-A (Segment-9) from Antilocapra americana (Pronghorn).